The chain runs to 279 residues: MADS-box transcription factor PHERES 1 (279 aa).

The MADS-box domain occupies 1–60 (MRGKMKLSFIENDSVRKTTFTKRKKGMLKKFNELVTLCGVDACAVIRSPYNSIQEPWPSR).

As to quaternary structure, interacts with AGL61/DIANA and AGL62. Male gametophyte, embryo and endosperm.

The protein localises to the nucleus. Its function is as follows. Probable transcription factor involved in the development of gametophytes and seeds. This is MADS-box transcription factor PHERES 1 (PHE1) from Arabidopsis thaliana (Mouse-ear cress).